A 132-amino-acid chain; its full sequence is Large ribosomal subunit protein uL14 (132 aa).

This sequence belongs to the universal ribosomal protein uL14 family. As to quaternary structure, part of the 50S ribosomal subunit. Forms a cluster with proteins L3 and L24e, part of which may contact the 16S rRNA in 2 intersubunit bridges.

Its function is as follows. Binds to 23S rRNA. Forms part of two intersubunit bridges in the 70S ribosome. This is Large ribosomal subunit protein uL14 from Methanosarcina mazei (strain ATCC BAA-159 / DSM 3647 / Goe1 / Go1 / JCM 11833 / OCM 88) (Methanosarcina frisia).